Here is a 61-residue protein sequence, read N- to C-terminus: Tryptophyllin-T1 (61 aa).

A signal peptide spans 1–22 (MDFLKKSLFLVLFLGLVSISLC). The propeptide occupies 23-53 (DEEKRQDDDEASEREEKKEIHEEGNQEERRD). A disordered region spans residues 25-61 (EKRQDDDEASEREEKKEIHEEGNQEERRDRPPSWIPK). Basic and acidic residues predominate over residues 36–55 (REEKKEIHEEGNQEERRDRP). At proline 56 the chain carries 4-hydroxyproline; partial.

The protein belongs to the frog skin active peptide (FSAP) family. Tryptophillin subfamily. Expressed by the skin glands.

Its subcellular location is the secreted. In Pithecopus azureus (Orange-legged monkey tree frog), this protein is Tryptophyllin-T1.